The following is a 373-amino-acid chain: Cobalt-precorrin-5B C(1)-methyltransferase (373 aa).

The protein belongs to the CbiD family.

It catalyses the reaction Co-precorrin-5B + S-adenosyl-L-methionine = Co-precorrin-6A + S-adenosyl-L-homocysteine. It participates in cofactor biosynthesis; adenosylcobalamin biosynthesis; cob(II)yrinate a,c-diamide from sirohydrochlorin (anaerobic route): step 6/10. Functionally, catalyzes the methylation of C-1 in cobalt-precorrin-5B to form cobalt-precorrin-6A. The polypeptide is Cobalt-precorrin-5B C(1)-methyltransferase (Polaromonas sp. (strain JS666 / ATCC BAA-500)).